The following is a 491-amino-acid chain: UDP-N-acetylmuramate--L-alanine ligase (491 aa).

126–132 (GTHGKTT) is an ATP binding site.

It belongs to the MurCDEF family.

It localises to the cytoplasm. The enzyme catalyses UDP-N-acetyl-alpha-D-muramate + L-alanine + ATP = UDP-N-acetyl-alpha-D-muramoyl-L-alanine + ADP + phosphate + H(+). It functions in the pathway cell wall biogenesis; peptidoglycan biosynthesis. Its function is as follows. Cell wall formation. This Salmonella agona (strain SL483) protein is UDP-N-acetylmuramate--L-alanine ligase.